The primary structure comprises 60 residues: U1-theraphotoxin-Agm3a (60 aa).

The signal sequence occupies residues 1–21 (MKFSVLVFILGLVLLLALSSA). Residues 22 to 29 (TEMEENAR) constitute a propeptide that is removed on maturation. 3 disulfides stabilise this stretch: cysteine 31–cysteine 45, cysteine 38–cysteine 50, and cysteine 44–cysteine 57.

This sequence belongs to the neurotoxin 10 (Hwtx-1) family. 63 (VsTx1) subfamily. In terms of tissue distribution, expressed by the venom gland.

The protein resides in the secreted. Inhibits sodium channels Nav1.7/SCN9A and potassium channels Kv11.1/KCNH2. Also binds the voltage-sensor domain of the potassium channel KvAP (from the archaeon Aeropyrum pernix) with very slow apparent binding kinetics and affects channel gating. Reaches its target by dynamically partitioning into anionic or zwitterionic headgroup lipid membranes. May bind to the open state of KvAP. This is U1-theraphotoxin-Agm3a from Acanthoscurria gomesiana (Tarantula spider).